The sequence spans 160 residues: Ribosomal RNA large subunit methyltransferase H (160 aa).

S-adenosyl-L-methionine contacts are provided by residues Leu-77, Gly-109, and 128–133 (FGRITL).

The protein belongs to the RNA methyltransferase RlmH family. As to quaternary structure, homodimer.

The protein localises to the cytoplasm. It carries out the reaction pseudouridine(1915) in 23S rRNA + S-adenosyl-L-methionine = N(3)-methylpseudouridine(1915) in 23S rRNA + S-adenosyl-L-homocysteine + H(+). Its function is as follows. Specifically methylates the pseudouridine at position 1915 (m3Psi1915) in 23S rRNA. The chain is Ribosomal RNA large subunit methyltransferase H from Oenococcus oeni (strain ATCC BAA-331 / PSU-1).